The sequence spans 172 residues: Signal peptidase complex catalytic subunit sec11 (172 aa).

Over 1–14 the chain is Cytoplasmic; the sequence is MLSGLANPRQAAVQ. Residues 15-35 form a helical; Signal-anchor for type II membrane protein membrane-spanning segment; that stretch reads LMNFGLILSTAFMMWKGISVI. The Lumenal segment spans residues 36-172; it reads TDSPSPIVVV…MGLVVVLQRE (137 aa). Residues Ser49 and His90 each act as charge relay system in the active site. The N-linked (GlcNAc...) asparagine glycan is linked to Asn111. Asp115 serves as the catalytic Charge relay system. Positions 158–169 are C-terminal short (CTS) helix; it reads VMLGLMGLVVVL.

It belongs to the peptidase S26B family. In terms of assembly, component of the signal peptidase complex (SPC) composed of a catalytic subunit SEC11 and three accessory subunits SPC1, SPC2 and SPC3. The complex induces a local thinning of the ER membrane which is used to measure the length of the signal peptide (SP) h-region of protein substrates. This ensures the selectivity of the complex towards h-regions shorter than 18-20 amino acids. SPC associates with the translocon complex.

The protein resides in the endoplasmic reticulum membrane. The enzyme catalyses Cleavage of hydrophobic, N-terminal signal or leader sequences from secreted and periplasmic proteins.. Catalytic component of the signal peptidase complex (SPC) which catalyzes the cleavage of N-terminal signal sequences from nascent proteins as they are translocated into the lumen of the endoplasmic reticulum. Specifically cleaves N-terminal signal peptides that contain a hydrophobic alpha-helix (h-region) shorter than 18-20 amino acids. In Neurospora crassa (strain ATCC 24698 / 74-OR23-1A / CBS 708.71 / DSM 1257 / FGSC 987), this protein is Signal peptidase complex catalytic subunit sec11 (sec11).